We begin with the raw amino-acid sequence, 279 residues long: 4-diphosphocytidyl-2-C-methyl-D-erythritol kinase (279 aa).

The active site involves lysine 9. Proline 93–serine 103 lines the ATP pocket. Residue aspartate 135 is part of the active site.

This sequence belongs to the GHMP kinase family. IspE subfamily.

The enzyme catalyses 4-CDP-2-C-methyl-D-erythritol + ATP = 4-CDP-2-C-methyl-D-erythritol 2-phosphate + ADP + H(+). Its pathway is isoprenoid biosynthesis; isopentenyl diphosphate biosynthesis via DXP pathway; isopentenyl diphosphate from 1-deoxy-D-xylulose 5-phosphate: step 3/6. Functionally, catalyzes the phosphorylation of the position 2 hydroxy group of 4-diphosphocytidyl-2C-methyl-D-erythritol. The chain is 4-diphosphocytidyl-2-C-methyl-D-erythritol kinase from Acinetobacter baylyi (strain ATCC 33305 / BD413 / ADP1).